The chain runs to 187 residues: Protein Flattop (187 aa).

The segment at 97-187 (THSGHGIHTH…TPQLEREEPQ (91 aa)) is disordered. The segment covering 122 to 131 (EGDQTCNAPT) has biased composition (polar residues). Residues 169–187 (KRREQSLEETPQLEREEPQ) are compositionally biased toward basic and acidic residues.

Belongs to the Flattop family.

The protein resides in the cytoplasm. Its subcellular location is the cytoskeleton. It is found in the cilium basal body. It localises to the cell projection. The protein localises to the cilium. The protein resides in the apical cell membrane. Its subcellular location is the cilium axoneme. Microtubule inner protein (MIP) part of the dynein-decorated doublet microtubules (DMTs) in cilia axoneme. Acts as a regulator of cilium basal body docking and positioning in mono- and multiciliated cells. Regulates basal body docking and cilia formation in multiciliated lung cells. Regulates kinocilium positioning and stereocilia bundle morphogenesis in the inner ear. This chain is Protein Flattop, found in Salmo salar (Atlantic salmon).